A 130-amino-acid polypeptide reads, in one-letter code: Holo-[acyl-carrier-protein] synthase (130 aa).

Residues Asp-9 and Glu-58 each contribute to the Mg(2+) site.

It belongs to the P-Pant transferase superfamily. AcpS family. The cofactor is Mg(2+).

It is found in the cytoplasm. It carries out the reaction apo-[ACP] + CoA = holo-[ACP] + adenosine 3',5'-bisphosphate + H(+). Its function is as follows. Transfers the 4'-phosphopantetheine moiety from coenzyme A to a Ser of acyl-carrier-protein. In Mycobacterium tuberculosis (strain CDC 1551 / Oshkosh), this protein is Holo-[acyl-carrier-protein] synthase.